Reading from the N-terminus, the 218-residue chain is LexA repressor (218 aa).

A DNA-binding region (H-T-H motif) is located at residues 28 to 48 (RAEIAAEFGFSSPNSAEEHLR). Active-site for autocatalytic cleavage activity residues include Ser-136 and Lys-173.

Belongs to the peptidase S24 family. As to quaternary structure, homodimer.

It catalyses the reaction Hydrolysis of Ala-|-Gly bond in repressor LexA.. Represses a number of genes involved in the response to DNA damage (SOS response), including recA and lexA. In the presence of single-stranded DNA, RecA interacts with LexA causing an autocatalytic cleavage which disrupts the DNA-binding part of LexA, leading to derepression of the SOS regulon and eventually DNA repair. This is LexA repressor from Cupriavidus metallidurans (strain ATCC 43123 / DSM 2839 / NBRC 102507 / CH34) (Ralstonia metallidurans).